The primary structure comprises 758 residues: 5-methyltetrahydropteroyltriglutamate--homocysteine methyltransferase (758 aa).

5-methyltetrahydropteroyltri-L-glutamate contacts are provided by residues 16–19 and lysine 116; that span reads RELK. Residues 436–438 and glutamate 489 each bind L-homocysteine; that span reads IGS. Residues 436–438 and glutamate 489 each bind L-methionine; that span reads IGS. 5-methyltetrahydropteroyltri-L-glutamate-binding positions include 520–521 and tryptophan 566; that span reads RC. Aspartate 604 is a binding site for L-homocysteine. Aspartate 604 is an L-methionine binding site. Glutamate 610 is a 5-methyltetrahydropteroyltri-L-glutamate binding site. 3 residues coordinate Zn(2+): histidine 646, cysteine 648, and glutamate 670. Histidine 699 acts as the Proton donor in catalysis. Cysteine 731 is a Zn(2+) binding site.

It belongs to the vitamin-B12 independent methionine synthase family. It depends on Zn(2+) as a cofactor.

The catalysed reaction is 5-methyltetrahydropteroyltri-L-glutamate + L-homocysteine = tetrahydropteroyltri-L-glutamate + L-methionine. Its pathway is amino-acid biosynthesis; L-methionine biosynthesis via de novo pathway; L-methionine from L-homocysteine (MetE route): step 1/1. In terms of biological role, catalyzes the transfer of a methyl group from 5-methyltetrahydrofolate to homocysteine resulting in methionine formation. The protein is 5-methyltetrahydropteroyltriglutamate--homocysteine methyltransferase of Xylella fastidiosa (strain M23).